Consider the following 382-residue polypeptide: V-type proton ATPase subunit C 1 (382 aa).

N-acetylthreonine is present on threonine 2.

It belongs to the V-ATPase C subunit family. As to quaternary structure, V-ATPase is a heteromultimeric enzyme made up of two complexes: the ATP-hydrolytic V1 complex and the proton translocation V0 complex. The V1 complex consists of three catalytic AB heterodimers that form a heterohexamer, three peripheral stalks each consisting of EG heterodimers, one central rotor including subunits D and F, and the regulatory subunits C and H. The proton translocation complex V0 consists of the proton transport subunit a, a ring of proteolipid subunits c9c'', rotary subunit d, subunits e and f, and the accessory subunits ATP6AP1/Ac45 and ATP6AP2/PRR. Ubiquitous. Abundant in brain, liver, kidney and testis.

It is found in the cytoplasmic vesicle. The protein localises to the secretory vesicle. The protein resides in the synaptic vesicle membrane. It localises to the clathrin-coated vesicle membrane. Subunit of the V1 complex of vacuolar(H+)-ATPase (V-ATPase), a multisubunit enzyme composed of a peripheral complex (V1) that hydrolyzes ATP and a membrane integral complex (V0) that translocates protons. V-ATPase is responsible for acidifying and maintaining the pH of intracellular compartments and in some cell types, is targeted to the plasma membrane, where it is responsible for acidifying the extracellular environment. Subunit C is necessary for the assembly of the catalytic sector of the enzyme and is likely to have a specific function in its catalytic activity. This is V-type proton ATPase subunit C 1 (Atp6v1c1) from Mus musculus (Mouse).